Here is a 146-residue protein sequence, read N- to C-terminus: Large-conductance mechanosensitive channel (146 aa).

Helical transmembrane passes span 12 to 32 (AFAM…GGAF) and 88 to 108 (LQAT…IKLI).

The protein belongs to the MscL family. As to quaternary structure, homopentamer.

The protein localises to the cell inner membrane. Functionally, channel that opens in response to stretch forces in the membrane lipid bilayer. May participate in the regulation of osmotic pressure changes within the cell. This is Large-conductance mechanosensitive channel from Bacteroides fragilis (strain ATCC 25285 / DSM 2151 / CCUG 4856 / JCM 11019 / LMG 10263 / NCTC 9343 / Onslow / VPI 2553 / EN-2).